We begin with the raw amino-acid sequence, 252 residues long: 5-oxoprolinase subunit A (252 aa).

Belongs to the LamB/PxpA family. As to quaternary structure, forms a complex composed of PxpA, PxpB and PxpC.

It carries out the reaction 5-oxo-L-proline + ATP + 2 H2O = L-glutamate + ADP + phosphate + H(+). Catalyzes the cleavage of 5-oxoproline to form L-glutamate coupled to the hydrolysis of ATP to ADP and inorganic phosphate. This Mycobacterium marinum (strain ATCC BAA-535 / M) protein is 5-oxoprolinase subunit A.